A 196-amino-acid polypeptide reads, in one-letter code: Nitrogen regulatory protein P-II homolog (196 aa).

A chloroplast-targeting transit peptide spans 1–61 (MAASMTKPIS…NNSRVLPVVS (61 aa)). ATP is bound by residues 108-112 (GFGAQ) and 161-164 (GDGK). Gly110 serves as a coordination point for Mg(2+).

Belongs to the P(II) protein family. As to quaternary structure, homodimer. Interacts with NAGK. Interaction with NAGK is dependent of MgATP and inhibited by 2-oxoglutarate, arginine, glutamate, citrate, and oxaloacetate.

The protein localises to the plastid. Its subcellular location is the chloroplast. Its function is as follows. Participates in sensing carbon and organic nitrogen status and regulates some steps of primary carbon and nitrogen metabolism. Required for nitrite uptake in chloroplasts and regulates arginine biosynthesis through interaction with acetylglutamate kinase (NAGK) in chloroplasts. Regulates fatty acids synthesis in chloroplasts by interacting with the acetyl-CoA carboxylase complex and inhibiting acetyl-CoA carboxylase (ACCase) activity. The polypeptide is Nitrogen regulatory protein P-II homolog (GLB1) (Arabidopsis thaliana (Mouse-ear cress)).